The following is a 680-amino-acid chain: SH3 domain-binding protein 1 (680 aa).

Residues 1-11 (MMKRQLHRMRQ) show a composition bias toward basic residues. Disordered regions lie at residues 1–24 (MMKRQLHRMRQLAHTGSSGRTPET) and 160–184 (SQAAKNSGSNQGLGGASGSHTHTTT). Residues 1–275 (MMKRQLHRMR…TAAPFSRVYG (275 aa)) are interaction with CGNL1. Residues 81–262 (MAESFKELDP…RDNHSQADHS (182 aa)) enclose the BAR domain. A compositionally biased stretch (polar residues) spans 160 to 169 (SQAAKNSGSN). Phosphoserine occurs at positions 241 and 262. The Rho-GAP domain occupies 276–469 (VSLRTHLQDL…ALIQNADTLF (194 aa)). The segment at 470 to 680 (PGDINFNVSG…RPRGLISETE (211 aa)) is interaction with CD2AP. The disordered stretch occupies residues 488–680 (EKVSSQQVSE…RPRGLISETE (193 aa)). The span at 502–516 (VTVPAPATTPAPTPA) shows a compositional bias: pro residues. Serine 535 is modified (phosphoserine). The segment covering 536–546 (PKVSRNPTETA) has biased composition (polar residues). Residues 561 to 571 (PARPTMPPPQP) show a composition bias toward pro residues. Serine 582 carries the post-translational modification Phosphoserine. Threonine 592 is modified (phosphothreonine). Residues 607–616 (APTMPPPLPP) carry the SH3-binding motif. Positions 609 to 621 (TMPPPLPPVPPQP) are enriched in pro residues. At serine 632 the chain carries Phosphoserine. The segment covering 660–671 (HPPPPALPPQPR) has biased composition (pro residues).

Interacts with RAC1. Interacts with the exocyst via EXOC4 and EXOC8; required for the localization of both SH3BP1 and the exocyst to the leading edge of migrating cells. Interacts with CD2AP and CGNL1; probably part of a complex at cell junctions. Interacts with CAPZA1; recruits CAPZA1 to forming cell junctions. May interact with AFDN. Interacts with PLXND1; they dissociate upon SEMA3E binding to PLXND1 allowing SH3BP1 to transduce downstream signal through RAC1 inactivation. Interacts with ABL1, GRB2 and SRC (via SH3 domain). Expressed in all tissues examined. Highest levels found in spleen and brain, lowest in heart and liver.

It is found in the cell projection. Its subcellular location is the cell junction. The protein localises to the tight junction. It localises to the adherens junction. The protein resides in the phagocytic cup. It is found in the nucleus. Its subcellular location is the cytoplasm. The protein localises to the cytosol. GTPase activating protein (GAP) which specifically converts GTP-bound Rho-type GTPases including RAC1 and CDC42 in their inactive GDP-bound form. By specifically inactivating RAC1 at the leading edge of migrating cells, it regulates the spatiotemporal organization of cell protrusions which is important for proper cell migration. Also negatively regulates CDC42 in the process of actin remodeling and the formation of epithelial cell junctions. Through its GAP activity toward RAC1 and/or CDC42 plays a specific role in phagocytosis of large particles. Specifically recruited by a PI3 kinase/PI3K-dependent mechanism to sites of large particles engagement, inactivates RAC1 and/or CDC42 allowing the reorganization of the underlying actin cytoskeleton required for engulfment. It also plays a role in angiogenesis and the process of repulsive guidance as part of a semaphorin-plexin signaling pathway. Following the binding of PLXND1 to extracellular SEMA3E it dissociates from PLXND1 and inactivates RAC1, inducing the intracellular reorganization of the actin cytoskeleton and the collapse of cells. The polypeptide is SH3 domain-binding protein 1 (Mus musculus (Mouse)).